Reading from the N-terminus, the 193-residue chain is Shikimate kinase (193 aa).

31–36 (GVGKTT) lines the ATP pocket. Position 35 (Thr35) interacts with Mg(2+). Substrate is bound by residues Asp53, Arg77, and Gly103. Arg141 serves as a coordination point for ATP. Arg160 provides a ligand contact to substrate. Gln176 lines the ATP pocket.

This sequence belongs to the shikimate kinase family. In terms of assembly, monomer. The cofactor is Mg(2+).

The protein resides in the cytoplasm. The catalysed reaction is shikimate + ATP = 3-phosphoshikimate + ADP + H(+). It functions in the pathway metabolic intermediate biosynthesis; chorismate biosynthesis; chorismate from D-erythrose 4-phosphate and phosphoenolpyruvate: step 5/7. In terms of biological role, catalyzes the specific phosphorylation of the 3-hydroxyl group of shikimic acid using ATP as a cosubstrate. The protein is Shikimate kinase of Novosphingobium aromaticivorans (strain ATCC 700278 / DSM 12444 / CCUG 56034 / CIP 105152 / NBRC 16084 / F199).